We begin with the raw amino-acid sequence, 188 residues long: ATP synthase subunit b (188 aa).

The chain crosses the membrane as a helical span at residues 5 to 25; that stretch reads MLLIFMMIVMIASSAMAAEAE.

The protein belongs to the ATPase B chain family. In terms of assembly, F-type ATPases have 2 components, F(1) - the catalytic core - and F(0) - the membrane proton channel. F(1) has five subunits: alpha(3), beta(3), gamma(1), delta(1), epsilon(1). F(0) has three main subunits: a(1), b(2) and c(10-14). The alpha and beta chains form an alternating ring which encloses part of the gamma chain. F(1) is attached to F(0) by a central stalk formed by the gamma and epsilon chains, while a peripheral stalk is formed by the delta and b chains.

The protein localises to the cell inner membrane. In terms of biological role, f(1)F(0) ATP synthase produces ATP from ADP in the presence of a proton or sodium gradient. F-type ATPases consist of two structural domains, F(1) containing the extramembraneous catalytic core and F(0) containing the membrane proton channel, linked together by a central stalk and a peripheral stalk. During catalysis, ATP synthesis in the catalytic domain of F(1) is coupled via a rotary mechanism of the central stalk subunits to proton translocation. Its function is as follows. Component of the F(0) channel, it forms part of the peripheral stalk, linking F(1) to F(0). The sequence is that of ATP synthase subunit b from Thermodesulfovibrio yellowstonii (strain ATCC 51303 / DSM 11347 / YP87).